Here is a 379-residue protein sequence, read N- to C-terminus: MANLRKTHPLLKIANDALVDLPTPSNISAWWNFGSLLGLCLISQILTGLFLAMHYTSDISTAFSSVAHICRDVNYGWLIRNLHANGASFFFICLYLHIARGLYYGSYLYKETWNIGVVLFLLVMMTAFVGYVLPWGQMSFWGATVITNLLSAVPYVGDSLVQWIWGGFSVDNATLTRFFAFHFLFPFVVAGATMLHLLFLHETGSNNPVGLNSDADKIPFHPYFSYKDLLGFIIMLTALTMLALFYPNLLGDPDNFTPANPMVTPPHIKPEWYFLFAYAILRSIPNKLGGVLALLSSILVLMVVPILHTSKQRGLTFRPISQLLFWILVADMLVLTWIGGMPVEHPYIIIGQVASVLYFSLFLVLNPLVGWLENKVMNW.

4 helical membrane passes run 33–53 (FGSL…FLAM), 77–98 (WLIR…YLHI), 113–133 (WNIG…GYVL), and 178–198 (FFAF…LHLL). Heme b-binding residues include H83 and H97. Heme b-binding residues include H182 and H196. H201 contacts a ubiquinone. The next 4 helical transmembrane spans lie at 226–246 (YKDL…ALFY), 288–308 (LGGV…PILH), 320–340 (ISQL…WIGG), and 347–367 (YIII…VLNP).

Belongs to the cytochrome b family. As to quaternary structure, the cytochrome bc1 complex contains 3 respiratory subunits (MT-CYB, CYC1 and UQCRFS1), 2 core proteins (UQCRC1 and UQCRC2) and probably 6 low-molecular weight proteins. Heme b is required as a cofactor.

Its subcellular location is the mitochondrion inner membrane. Its function is as follows. Component of the ubiquinol-cytochrome c reductase complex (complex III or cytochrome b-c1 complex) that is part of the mitochondrial respiratory chain. The b-c1 complex mediates electron transfer from ubiquinol to cytochrome c. Contributes to the generation of a proton gradient across the mitochondrial membrane that is then used for ATP synthesis. This chain is Cytochrome b (mt-cyb), found in Anguilla mossambica (African longfin eel).